The sequence spans 369 residues: Maltose/maltodextrin import ATP-binding protein MalK (369 aa).

The ABC transporter domain occupies 4 to 234 (VTLHNVSKAY…PVNRFVASFI (231 aa)). Residue 36-43 (GPSGCGKS) participates in ATP binding.

It belongs to the ABC transporter superfamily. Maltooligosaccharide importer (TC 3.A.1.1.1) family. As to quaternary structure, the complex is composed of two ATP-binding proteins (MalK), two transmembrane proteins (MalG and MalK) and a solute-binding protein (MalE).

The protein localises to the cell inner membrane. It carries out the reaction D-maltose(out) + ATP + H2O = D-maltose(in) + ADP + phosphate + H(+). Part of the ABC transporter complex MalEFGK involved in maltose/maltodextrin import. Responsible for energy coupling to the transport system. The polypeptide is Maltose/maltodextrin import ATP-binding protein MalK (Photorhabdus laumondii subsp. laumondii (strain DSM 15139 / CIP 105565 / TT01) (Photorhabdus luminescens subsp. laumondii)).